We begin with the raw amino-acid sequence, 67 residues long: Large ribosomal subunit protein bL35 (67 aa).

Residues 1-20 form a disordered region; the sequence is MPKLKTKSGAKKRFVPKKSG.

It belongs to the bacterial ribosomal protein bL35 family.

This is Large ribosomal subunit protein bL35 from Anaeromyxobacter dehalogenans (strain 2CP-C).